We begin with the raw amino-acid sequence, 374 residues long: 3-isopropylmalate dehydrogenase (374 aa).

Position 83–96 (83–96 (GPKWDNLPPEIRPE)) interacts with NAD(+). Residues R104, R114, R142, and D231 each coordinate substrate. Mg(2+) is bound by residues D231, D255, and D259. An NAD(+)-binding site is contributed by 288–300 (GSAPDIAGQNKAN).

This sequence belongs to the isocitrate and isopropylmalate dehydrogenases family. LeuB type 1 subfamily. Homodimer. It depends on Mg(2+) as a cofactor. Requires Mn(2+) as cofactor.

It is found in the cytoplasm. The catalysed reaction is (2R,3S)-3-isopropylmalate + NAD(+) = 4-methyl-2-oxopentanoate + CO2 + NADH. Its pathway is amino-acid biosynthesis; L-leucine biosynthesis; L-leucine from 3-methyl-2-oxobutanoate: step 3/4. In terms of biological role, catalyzes the oxidation of 3-carboxy-2-hydroxy-4-methylpentanoate (3-isopropylmalate) to 3-carboxy-4-methyl-2-oxopentanoate. The product decarboxylates to 4-methyl-2 oxopentanoate. The protein is 3-isopropylmalate dehydrogenase of Carboxydothermus hydrogenoformans (strain ATCC BAA-161 / DSM 6008 / Z-2901).